Here is a 463-residue protein sequence, read N- to C-terminus: Bifunctional protein HldE (463 aa).

Residues 1-311 are ribokinase; the sequence is MKQILVVGDL…EEIALILNQT (311 aa). 191 to 194 lines the ATP pocket; that stretch reads NRIE. Asp260 is an active-site residue. The tract at residues 334-463 is cytidylyltransferase; sequence FTNGCFDILH…IERIKRTCND (130 aa).

This sequence in the N-terminal section; belongs to the carbohydrate kinase PfkB family. The protein in the C-terminal section; belongs to the cytidylyltransferase family. Homodimer.

The catalysed reaction is D-glycero-beta-D-manno-heptose 7-phosphate + ATP = D-glycero-beta-D-manno-heptose 1,7-bisphosphate + ADP + H(+). It catalyses the reaction D-glycero-beta-D-manno-heptose 1-phosphate + ATP + H(+) = ADP-D-glycero-beta-D-manno-heptose + diphosphate. It functions in the pathway nucleotide-sugar biosynthesis; ADP-L-glycero-beta-D-manno-heptose biosynthesis; ADP-L-glycero-beta-D-manno-heptose from D-glycero-beta-D-manno-heptose 7-phosphate: step 1/4. It participates in nucleotide-sugar biosynthesis; ADP-L-glycero-beta-D-manno-heptose biosynthesis; ADP-L-glycero-beta-D-manno-heptose from D-glycero-beta-D-manno-heptose 7-phosphate: step 3/4. Catalyzes the phosphorylation of D-glycero-D-manno-heptose 7-phosphate at the C-1 position to selectively form D-glycero-beta-D-manno-heptose-1,7-bisphosphate. In terms of biological role, catalyzes the ADP transfer from ATP to D-glycero-beta-D-manno-heptose 1-phosphate, yielding ADP-D-glycero-beta-D-manno-heptose. This chain is Bifunctional protein HldE, found in Helicobacter pylori (strain Shi470).